The following is a 231-amino-acid chain: Probable glutathione S-transferase GSTU1 (231 aa).

A GST N-terminal domain is found at 5–84 (KELVLLDFWV…YLDDAFPGTP (80 aa)). Residues S15, K42, I56, and 68–69 (ES) each bind glutathione. The region spanning 97-220 (AAYARATARF…LPSPEKVYDF (124 aa)) is the GST C-terminal domain.

It belongs to the GST superfamily. Tau family.

The enzyme catalyses RX + glutathione = an S-substituted glutathione + a halide anion + H(+). Functionally, conjugation of reduced glutathione to a wide number of exogenous and endogenous hydrophobic electrophiles. This is Probable glutathione S-transferase GSTU1 (GSTU1) from Oryza sativa subsp. indica (Rice).